Reading from the N-terminus, the 108-residue chain is Cytochrome c (108 aa).

C19, C22, H23, and M85 together coordinate heme c.

Belongs to the cytochrome c family. In terms of processing, binds 1 heme c group covalently per subunit.

It localises to the mitochondrion intermembrane space. In terms of biological role, electron carrier protein. The oxidized form of the cytochrome c heme group can accept an electron from the heme group of the cytochrome c1 subunit of cytochrome reductase. Cytochrome c then transfers this electron to the cytochrome oxidase complex, the final protein carrier in the mitochondrial electron-transport chain. In Stellaria longipes (Longstalk starwort), this protein is Cytochrome c.